A 305-amino-acid chain; its full sequence is Acyl transferase (305 aa).

Catalysis depends on charge relay system residues S116, D213, and H243.

The protein belongs to the LuxD family.

Its pathway is lipid metabolism; fatty acid reduction for biolumincescence. Functionally, acyl transferase is part of the fatty acid reductase system required for aldehyde biosynthesis; it produces fatty acids for the luminescent reaction. This is Acyl transferase from Photobacterium leiognathi.